The following is a 1059-amino-acid chain: Mitogen-activated protein kinase kinase kinase mlk-1 (1059 aa).

A disordered region spans residues 1–66 (MEQASVPSYV…ESSQVSRESP (66 aa)). A compositionally biased stretch (low complexity) spans 38-48 (DTTTASTSTDS). Residues 69 to 130 (RASKAFVASY…PSNYAREVTY (62 aa)) enclose the SH3 domain. Positions 150-454 (TLSDCQIGHG…TLAISFKQYA (305 aa)) constitute a Protein kinase domain. Residues 156–164 (IGHGATATV) and K193 each bind ATP. A coiled-coil region spans residues 199-224 (ASNFRADVVSTDEQLEQLKREANLVN). D297 serves as the catalytic Proton acceptor. Residue S355 is modified to Phosphoserine; by max-2 and tpa-1. 2 disordered regions span residues 617-699 (PVVS…QTTR) and 714-808 (RAQS…SSSD). Polar residues predominate over residues 623-633 (MDDSNTFSTID). 2 stretches are compositionally biased toward basic and acidic residues: residues 639-648 (DPNHSKESKK) and 662-674 (NKRD…DERA). Low complexity predominate over residues 678-689 (SISSRSSSTTSS). Polar residues predominate over residues 690-699 (NRLITGQTTR). Basic and acidic residues predominate over residues 749–759 (RYVKDLEKDTP). Polar residues-rich tracts occupy residues 774–790 (LDQT…SINN) and 798–808 (SRRTTANSSSD). An NPQY motif motif is present at residues 937–940 (NPQY). A Phosphotyrosine modification is found at Y940.

This sequence belongs to the protein kinase superfamily. STE Ser/Thr protein kinase family. MAP kinase kinase kinase subfamily. Interacts with max-2; the interaction is independent of max-2 and mlk-1 kinase activities. May interact (via NPQY motif when phosphorylated on tyrosine residue) with shc-1 (via PID domain); the interaction may facilitate mek-1 phosphorylation by bringing mlk-1 and mek-1 together. Interacts with svh-2 (via cytoplasmic domain). Interacts with tpa-1. Mg(2+) is required as a cofactor. May be phosphorylated on tyrosine residues by svh-2. In terms of processing, may be ubiquitinated and targeted for proteasomal degradation by E3 ubiquitin ligase rpm-1. As to expression, expressed in pharynx, intestine, hypodermis, neurons and body muscles.

It carries out the reaction L-seryl-[protein] + ATP = O-phospho-L-seryl-[protein] + ADP + H(+). It catalyses the reaction L-threonyl-[protein] + ATP = O-phospho-L-threonyl-[protein] + ADP + H(+). Its activity is regulated as follows. Activated by phosphorylation at Ser-355. May be activated by svh-2-mediated phosphorylation. Functionally, serine/threonine-protein kinase which, by phosphorylating and activating mek-1, plays an important role in the activation of the JNK pathway composed of mlk-1, mek-1 and kgb-1. Involved in the response to environmental stress such as heavy metals. By activating the JNK pathway downstream of tyrosine receptor svh-2, plays a role in axon regeneration after injury. The chain is Mitogen-activated protein kinase kinase kinase mlk-1 from Caenorhabditis elegans.